The chain runs to 492 residues: N-succinylglutamate 5-semialdehyde dehydrogenase (492 aa).

220-225 contributes to the NAD(+) binding site; the sequence is GSANTG. Catalysis depends on residues E243 and C277.

The protein belongs to the aldehyde dehydrogenase family. AstD subfamily.

The catalysed reaction is N-succinyl-L-glutamate 5-semialdehyde + NAD(+) + H2O = N-succinyl-L-glutamate + NADH + 2 H(+). It functions in the pathway amino-acid degradation; L-arginine degradation via AST pathway; L-glutamate and succinate from L-arginine: step 4/5. Its function is as follows. Catalyzes the NAD-dependent reduction of succinylglutamate semialdehyde into succinylglutamate. The chain is N-succinylglutamate 5-semialdehyde dehydrogenase from Escherichia coli O6:H1 (strain CFT073 / ATCC 700928 / UPEC).